The following is a 500-amino-acid chain: Probable trehalose-phosphate phosphatase 8 (500 aa).

The protein belongs to the trehalose phosphatase family. Requires a divalent metal cation as cofactor.

The catalysed reaction is alpha,alpha-trehalose 6-phosphate + H2O = alpha,alpha-trehalose + phosphate. It functions in the pathway glycan biosynthesis; trehalose biosynthesis. Its function is as follows. Removes the phosphate from trehalose 6-phosphate to produce free trehalose. Trehalose accumulation in plant may improve abiotic stress tolerance. The protein is Probable trehalose-phosphate phosphatase 8 (TPP8) of Oryza sativa subsp. japonica (Rice).